The following is a 186-amino-acid chain: Probable RNA 2'-phosphotransferase (186 aa).

This sequence belongs to the KptA/TPT1 family.

Its function is as follows. Removes the 2'-phosphate from RNA via an intermediate in which the phosphate is ADP-ribosylated by NAD followed by a presumed transesterification to release the RNA and generate ADP-ribose 1''-2''-cyclic phosphate (APPR&gt;P). May function as an ADP-ribosylase. This Pectobacterium carotovorum subsp. carotovorum (strain PC1) protein is Probable RNA 2'-phosphotransferase.